The following is a 77-amino-acid chain: MRKQNLIEMEGIVTESLPNAMFRVCLDNGCQVLAHISGKIRKNYIRILLGDRVKVELSPYDLTKGRITYRLRTRSPS.

One can recognise an S1-like domain in the interval 1-72 (MRKQNLIEME…TKGRITYRLR (72 aa)).

Belongs to the IF-1 family. Component of the 30S ribosomal translation pre-initiation complex which assembles on the 30S ribosome in the order IF-2 and IF-3, IF-1 and N-formylmethionyl-tRNA(fMet); mRNA recruitment can occur at any time during PIC assembly.

It localises to the plastid. The protein resides in the chloroplast. One of the essential components for the initiation of protein synthesis. Stabilizes the binding of IF-2 and IF-3 on the 30S subunit to which N-formylmethionyl-tRNA(fMet) subsequently binds. Helps modulate mRNA selection, yielding the 30S pre-initiation complex (PIC). Upon addition of the 50S ribosomal subunit IF-1, IF-2 and IF-3 are released leaving the mature 70S translation initiation complex. This Staurastrum punctulatum (Green alga) protein is Translation initiation factor IF-1, chloroplastic.